A 739-amino-acid polypeptide reads, in one-letter code: Phosphoribosylformylglycinamidine synthase subunit PurL (739 aa).

The active site involves H53. Residues Y56 and K95 each coordinate ATP. E97 is a binding site for Mg(2+). Residues 98–101 and R120 each bind substrate; that span reads SHNH. The Proton acceptor role is filled by H99. Mg(2+) is bound at residue D121. Residue Q244 coordinates substrate. Residue D274 participates in Mg(2+) binding. 318–320 lines the substrate pocket; the sequence is ESQ. ATP is bound by residues D501 and G538. Residue N539 coordinates Mg(2+). S541 is a substrate binding site.

The protein belongs to the FGAMS family. In terms of assembly, monomer. Part of the FGAM synthase complex composed of 1 PurL, 1 PurQ and 2 PurS subunits.

It is found in the cytoplasm. It catalyses the reaction N(2)-formyl-N(1)-(5-phospho-beta-D-ribosyl)glycinamide + L-glutamine + ATP + H2O = 2-formamido-N(1)-(5-O-phospho-beta-D-ribosyl)acetamidine + L-glutamate + ADP + phosphate + H(+). It functions in the pathway purine metabolism; IMP biosynthesis via de novo pathway; 5-amino-1-(5-phospho-D-ribosyl)imidazole from N(2)-formyl-N(1)-(5-phospho-D-ribosyl)glycinamide: step 1/2. Part of the phosphoribosylformylglycinamidine synthase complex involved in the purines biosynthetic pathway. Catalyzes the ATP-dependent conversion of formylglycinamide ribonucleotide (FGAR) and glutamine to yield formylglycinamidine ribonucleotide (FGAM) and glutamate. The FGAM synthase complex is composed of three subunits. PurQ produces an ammonia molecule by converting glutamine to glutamate. PurL transfers the ammonia molecule to FGAR to form FGAM in an ATP-dependent manner. PurS interacts with PurQ and PurL and is thought to assist in the transfer of the ammonia molecule from PurQ to PurL. This Listeria welshimeri serovar 6b (strain ATCC 35897 / DSM 20650 / CCUG 15529 / CIP 8149 / NCTC 11857 / SLCC 5334 / V8) protein is Phosphoribosylformylglycinamidine synthase subunit PurL.